The primary structure comprises 428 residues: Inward rectifier potassium channel 2 (428 aa).

Topologically, residues 1-81 are cytoplasmic; that stretch reads MGSVRTNRYS…IFTTCVDIRW (81 aa). Cys-76 carries the S-nitrosocysteine modification. A helical transmembrane segment spans residues 82–106; the sequence is RWMLVIFCLAFVLSWLFFGCVFWLI. Residues 107-128 are Extracellular-facing; it reads ALLHGDLDTSKVSKACVSEVNS. The segment at residues 129–140 is an intramembrane region (helical; Pore-forming); that stretch reads FTAAFLFSIETQ. Residues 141–147 constitute an intramembrane region (pore-forming); sequence TTIGYGF. The short motif at 142–147 is the Selectivity filter element; the sequence is TIGYGF. At 148-156 the chain is on the extracellular side; sequence RCVTDECPI. The helical transmembrane segment at 157-178 threads the bilayer; the sequence is AVFMVVFQSIVGCIIDAFIIGA. The Cytoplasmic segment spans residues 179–428; sequence VMAKMAKPKK…PRPLRRESEI (250 aa). The segment at 181–208 is polyphosphoinositide (PIP2)-binding; it reads AKMAKPKKRNETLVFSHNAVIAMRDGKL. The interval 383–428 is disordered; that stretch reads TSKEEEEDSENGVPESTSTDSPPGIDLHNQASVPLEPRPLRRESEI. The short motif at 426 to 428 is the PDZ-binding element; the sequence is SEI.

The protein belongs to the inward rectifier-type potassium channel (TC 1.A.2.1) family. KCNJ2 subfamily. As to quaternary structure, homotetramer. Homomultimeric and heteromultimeric association with KCNJ4/Kir2.3. Can form heteromeric channels with Kir2.6/KCNJ18. Associates, via its PDZ-recognition domain, with a complex containing LIN7A, LIN7B, LIN7C, DLG1, CASK and APBA1. Post-translationally, S-nitrosylation increases the open probability and inward rectifying currents. Prominently expressed in the central nervous system. Also found in other excitable tissues such as heart and skeletal muscle.

It is found in the cell membrane. The protein resides in the sarcolemma. The protein localises to the T-tubule. It catalyses the reaction K(+)(in) = K(+)(out). Its activity is regulated as follows. Activated by phosphatidylinositol 4,5 biphosphate (PtdIns(4,5)P2). Inward rectifier potassium channels are characterized by a greater tendency to allow potassium to flow into the cell rather than out of it. Their voltage dependence is regulated by the concentration of extracellular potassium; as external potassium is raised, the voltage range of the channel opening shifts to more positive voltages. The inward rectification is mainly due to the blockage of outward current by internal magnesium. Can be blocked by extracellular barium and cesium. Probably participates in establishing action potential waveform and excitability of neuronal and muscle tissues. The chain is Inward rectifier potassium channel 2 (Kcnj2) from Mus musculus (Mouse).